Here is a 190-residue protein sequence, read N- to C-terminus: Glutathione peroxidase 2 (190 aa).

Selenocysteine 40 is a catalytic residue. Residue selenocysteine 40 is a non-standard amino acid, selenocysteine.

The protein belongs to the glutathione peroxidase family. As to quaternary structure, homotetramer. In terms of tissue distribution, mucosal epithelium of the gastrointestinal tract.

The protein localises to the cytoplasm. It is found in the cytosol. The catalysed reaction is 2 glutathione + H2O2 = glutathione disulfide + 2 H2O. It carries out the reaction a hydroperoxy polyunsaturated fatty acid + 2 glutathione = a hydroxy polyunsaturated fatty acid + glutathione disulfide + H2O. The enzyme catalyses tert-butyl hydroperoxide + 2 glutathione = tert-butanol + glutathione disulfide + H2O. It catalyses the reaction cumene hydroperoxide + 2 glutathione = 2-phenylpropan-2-ol + glutathione disulfide + H2O. The catalysed reaction is (13S)-hydroperoxy-(9Z,11E)-octadecadienoate + 2 glutathione = (13S)-hydroxy-(9Z,11E)-octadecadienoate + glutathione disulfide + H2O. It carries out the reaction (5S)-hydroperoxy-(6E,8Z,11Z,14Z)-eicosatetraenoate + 2 glutathione = (5S)-hydroxy-(6E,8Z,11Z,14Z)-eicosatetraenoate + glutathione disulfide + H2O. The enzyme catalyses (12R)-hydroperoxy-(5Z,8Z,10E,14Z)-eicosatetraenoate + 2 glutathione = (12R)-hydroxy-(5Z,8Z,10E,14Z)-eicosatetraenoate + glutathione disulfide + H2O. It catalyses the reaction (15S)-hydroperoxy-(5Z,8Z,11Z,13E)-eicosatetraenoate + 2 glutathione = (15S)-hydroxy-(5Z,8Z,11Z,13E)-eicosatetraenoate + glutathione disulfide + H2O. Functionally, catalyzes the reduction of hydroperoxides in a glutathione-dependent manner thus regulating cellular redox homeostasis. Can reduce small soluble hydroperoxide such as H2O2. Can reduce cumene hydroperoxide and tert-butyl hydroperoxide, as well as several fatty acid-derived hydroperoxides. Cannot reduce phosphatidycholine hydroperoxide. This is Glutathione peroxidase 2 (Gpx2) from Rattus norvegicus (Rat).